The chain runs to 205 residues: GTP cyclohydrolase-2 (205 aa).

Residue 49-53 participates in GTP binding; the sequence is RIHSE. Zn(2+) is bound by residues Cys-54, Cys-65, and Cys-67. GTP-binding positions include Gln-70, 92–94, and Thr-114; that span reads EGR. Catalysis depends on Asp-126, which acts as the Proton acceptor. Catalysis depends on Arg-128, which acts as the Nucleophile. GTP contacts are provided by Thr-149 and Lys-154.

The protein belongs to the GTP cyclohydrolase II family. Zn(2+) is required as a cofactor.

It catalyses the reaction GTP + 4 H2O = 2,5-diamino-6-hydroxy-4-(5-phosphoribosylamino)-pyrimidine + formate + 2 phosphate + 3 H(+). Its pathway is cofactor biosynthesis; riboflavin biosynthesis; 5-amino-6-(D-ribitylamino)uracil from GTP: step 1/4. Catalyzes the conversion of GTP to 2,5-diamino-6-ribosylamino-4(3H)-pyrimidinone 5'-phosphate (DARP), formate and pyrophosphate. This chain is GTP cyclohydrolase-2, found in Shewanella sediminis (strain HAW-EB3).